A 451-amino-acid polypeptide reads, in one-letter code: F-box only protein 47 (451 aa).

The F-box domain maps to 41–91 (LGNFKVLPLEILHIILRYLSVKDIGMLSMVSKTVSQHIINYISTSSGSRRL).

Part of a SCF (SKP1-cullin-F-box) protein ligase complex.

In terms of biological role, probably recognizes and binds to some phosphorylated proteins and promotes their ubiquitination and degradation. The sequence is that of F-box only protein 47 (Fbxo47) from Mus musculus (Mouse).